The sequence spans 790 residues: Choline transporter-like 2 (790 aa).

A helical membrane pass occupies residues 47 to 67; it reads PCLFLFVTFLCAWGYVAYYAV. Asn-102 and Asn-259 each carry an N-linked (GlcNAc...) asparagine glycan. Transmembrane regions (helical) follow at residues 288 to 308, 319 to 339, and 344 to 364; these read IITP…FQMI, ILVF…MLRW, and LVWI…YYSF. Asn-384 carries N-linked (GlcNAc...) asparagine glycosylation. The next 2 membrane-spanning stretches (helical) occupy residues 400 to 420 and 449 to 469; these read LWIL…VLVL and LVPW…LLFL. Asn-483 carries an N-linked (GlcNAc...) asparagine glycan. The next 4 membrane-spanning stretches (helical) occupy residues 545–565, 592–612, 691–711, and 728–748; these read VIGF…VLAF, VYYH…CKII, VTGF…AAVT, and FVPA…FFSV.

The protein belongs to the CTL (choline transporter-like) family.

The protein resides in the membrane. The protein is Choline transporter-like 2 of Anopheles gambiae (African malaria mosquito).